We begin with the raw amino-acid sequence, 733 residues long: Catalase-peroxidase (733 aa).

The segment at 1-25 is disordered; that stretch reads MNEERKCPITGATHKPSAEKGRSNH. Over residues 16–25 the composition is skewed to basic and acidic residues; the sequence is PSAEKGRSNH. The tryptophyl-tyrosyl-methioninium (Trp-Tyr) (with M-245) cross-link spans 96-219; the sequence is WHSAGTYRTS…LAAVQMGLIY (124 aa). His97 functions as the Proton acceptor in the catalytic mechanism. The segment at residues 219 to 245 is a cross-link (tryptophyl-tyrosyl-methioninium (Tyr-Met) (with W-96)); sequence YVNPEGPNGKPDPLAAAKDIRETFARM. His260 is a heme b binding site.

The protein belongs to the peroxidase family. Peroxidase/catalase subfamily. Homodimer or homotetramer. It depends on heme b as a cofactor. Post-translationally, formation of the three residue Trp-Tyr-Met cross-link is important for the catalase, but not the peroxidase activity of the enzyme.

The catalysed reaction is H2O2 + AH2 = A + 2 H2O. The enzyme catalyses 2 H2O2 = O2 + 2 H2O. Bifunctional enzyme with both catalase and broad-spectrum peroxidase activity. The polypeptide is Catalase-peroxidase (Chlorobium chlorochromatii (strain CaD3)).